The primary structure comprises 56 residues: Single-pass membrane and coiled-coil domain-containing protein 4 homolog (56 aa).

The segment at 1-27 (MRQLPGKAAKETRKMKRERKQQNKEGH) is disordered. A coiled-coil region spans residues 9–31 (AKETRKMKRERKQQNKEGHNRVV). A helical transmembrane segment spans residues 30 to 50 (VVTVAIPVCLAVFVMLIVYVY).

This sequence belongs to the SMCO4 family.

It localises to the membrane. The protein is Single-pass membrane and coiled-coil domain-containing protein 4 homolog of Nematostella vectensis (Starlet sea anemone).